Consider the following 557-residue polypeptide: Aerobic glycerol-3-phosphate dehydrogenase (557 aa).

An FAD-binding site is contributed by 21–49 (DVVIIGGGITGAGIALDASQRGMKVALVE).

Belongs to the FAD-dependent glycerol-3-phosphate dehydrogenase family. Requires FAD as cofactor.

The protein resides in the cytoplasm. The enzyme catalyses a quinone + sn-glycerol 3-phosphate = dihydroxyacetone phosphate + a quinol. It participates in polyol metabolism; glycerol degradation via glycerol kinase pathway; glycerone phosphate from sn-glycerol 3-phosphate (aerobic route): step 1/1. This Staphylococcus haemolyticus (strain JCSC1435) protein is Aerobic glycerol-3-phosphate dehydrogenase (glpD).